Reading from the N-terminus, the 547-residue chain is Chaperonin GroEL (547 aa).

ATP-binding positions include 30-33, Lys51, 87-91, Gly415, and Asp496; these read TLGP and DGTTT. Residues 525–547 are disordered; it reads KPEPKSPAGGPGMGGMGGMDGMM. A compositionally biased stretch (gly residues) spans 533–547; sequence GGPGMGGMGGMDGMM.

It belongs to the chaperonin (HSP60) family. Forms a cylinder of 14 subunits composed of two heptameric rings stacked back-to-back. Interacts with the co-chaperonin GroES.

Its subcellular location is the cytoplasm. The enzyme catalyses ATP + H2O + a folded polypeptide = ADP + phosphate + an unfolded polypeptide.. Its function is as follows. Together with its co-chaperonin GroES, plays an essential role in assisting protein folding. The GroEL-GroES system forms a nano-cage that allows encapsulation of the non-native substrate proteins and provides a physical environment optimized to promote and accelerate protein folding. In Cereibacter sphaeroides (strain ATCC 17029 / ATH 2.4.9) (Rhodobacter sphaeroides), this protein is Chaperonin GroEL.